The primary structure comprises 830 residues: Cyclin-dependent kinase inhibitor FAR1 (830 aa).

The disordered stretch occupies residues 1–31 (MKTPTRVSFEKKIHTPPSGDRDAERSPPKKF). A compositionally biased stretch (basic and acidic residues) spans 8–27 (SFEKKIHTPPSGDRDAERSP). Residue Ser87 is modified to Phosphoserine; by CDC28. Ser110 and Ser114 each carry phosphoserine. The segment at 202–252 (CLICEESISSTFTGEKVVESTCSHTSHYNCYLMLFETLYFQGKFPECKICG) adopts an RING-type zinc-finger fold. Thr306 bears the Phosphothreonine mark.

As to quaternary structure, associates with the CDC28-CLN complex. Thought to be phosphorylated by MAP kinase FUS3. Thought to enhance the binding of FAR1 to G1-specific cyclin-dependent kinase (CDK) complexes.

Inhibitor of the cyclin-dependent kinase CDC28. Necessary for cell cycle arrest. Involved in pheromone response. Contributes to mating efficiency. Required for oriented polarization of yeast cells in response to mating pheromones. In Saccharomyces cerevisiae (strain ATCC 204508 / S288c) (Baker's yeast), this protein is Cyclin-dependent kinase inhibitor FAR1 (FAR1).